The sequence spans 1289 residues: Ethylene-insensitive protein 2.1 (1289 aa).

The next 5 membrane-spanning stretches (helical) occupy residues leucine 18–tryptophan 38, phenylalanine 48–tyrosine 68, phenylalanine 96–isoleucine 116, leucine 128–leucine 148, and serine 155–isoleucine 175. Asparagine 185 is a glycosylation site (N-linked (GlcNAc...) asparagine). The chain crosses the membrane as a helical span at residues leucine 199 to valine 219. Asparagine 227 carries an N-linked (GlcNAc...) asparagine glycan. Transmembrane regions (helical) follow at residues leucine 235–leucine 255, alanine 260–methionine 280, valine 288–tryptophan 308, isoleucine 335–glutamine 355, leucine 356–phenylalanine 376, phenylalanine 393–valine 413, and tyrosine 439–threonine 459. Asparagine 521 is a glycosylation site (N-linked (GlcNAc...) asparagine). Positions leucine 611 to asparagine 659 are disordered. Positions glutamate 616–glutamate 626 are enriched in acidic residues. A compositionally biased stretch (polar residues) spans serine 635–glycine 652. Residues serine 646 and serine 663 each carry the phosphoserine modification. N-linked (GlcNAc...) asparagine glycosylation is present at asparagine 745. A disordered region spans residues serine 792–glutamine 816. Positions proline 807–glutamine 816 are enriched in polar residues. Threonine 819 is subject to Phosphothreonine. Residue serine 923 is modified to Phosphoserine. An N-linked (GlcNAc...) asparagine glycan is attached at asparagine 1025. Residues histidine 1208–arginine 1227 are disordered. Positions leucine 1274–leucine 1281 match the Nuclear localization signal motif.

The protein belongs to the NRAMP (TC 2.A.55) family.

It localises to the endoplasmic reticulum membrane. It is found in the nucleus. The protein localises to the cytoplasm. Its function is as follows. Central factor in signaling pathways regulated by ethylene (ET) and involved in various processes including development, plant defense, senescence, nucleotide sugar flux, and tropisms. Trafficking signal inducing ethylene response. The nuclear localization is both necessary and sufficient to activate EIN3-mediated transcription and ethylene responses. The protein is Ethylene-insensitive protein 2.1 of Populus trichocarpa (Western balsam poplar).